The primary structure comprises 116 residues: Mercuric transport protein MerT (116 aa).

Transmembrane regions (helical) follow at residues 16–36 (LAAILASACCLGPLVLIALGF) and 46–66 (VLEPYRPIFIGVALVALFFAW). Positions 24 and 25 each coordinate Hg(2+). 2 residues coordinate Hg(2+): cysteine 76 and cysteine 82. A helical membrane pass occupies residues 94-114 (IFWGVAVLVLVALGFPYVVPF).

Belongs to the MerT family.

The protein resides in the cell inner membrane. Involved in mercury resistance. Probably transfers a mercuric ion from the periplasmic Hg(2+)-binding protein MerP to the cytoplasmic mercuric reductase MerA. In Pseudomonas fluorescens, this protein is Mercuric transport protein MerT.